Consider the following 198-residue polypeptide: UPF0314 protein Atu8092 (198 aa).

3 consecutive transmembrane segments (helical) span residues 14–34 (LRWF…LYAM), 64–84 (WYTP…WLLF), and 150–170 (VPVW…GWLI).

The protein belongs to the UPF0314 family.

It is found in the cell membrane. The protein is UPF0314 protein Atu8092 of Agrobacterium fabrum (strain C58 / ATCC 33970) (Agrobacterium tumefaciens (strain C58)).